Reading from the N-terminus, the 180-residue chain is Large ribosomal subunit protein uL6 (180 aa).

It belongs to the universal ribosomal protein uL6 family. As to quaternary structure, part of the 50S ribosomal subunit.

Its function is as follows. This protein binds to the 23S rRNA, and is important in its secondary structure. It is located near the subunit interface in the base of the L7/L12 stalk, and near the tRNA binding site of the peptidyltransferase center. This Mesoplasma florum (strain ATCC 33453 / NBRC 100688 / NCTC 11704 / L1) (Acholeplasma florum) protein is Large ribosomal subunit protein uL6.